The sequence spans 251 residues: Coproheme decarboxylase (251 aa).

Residues R133, 147-151 (YPMSK), H174, Q187, and S225 each bind Fe-coproporphyrin III. Y147 is a catalytic residue.

The protein belongs to the ChdC family. Type 1 subfamily. The cofactor is Fe-coproporphyrin III.

It catalyses the reaction Fe-coproporphyrin III + 2 H2O2 + 2 H(+) = heme b + 2 CO2 + 4 H2O. It carries out the reaction Fe-coproporphyrin III + H2O2 + H(+) = harderoheme III + CO2 + 2 H2O. The enzyme catalyses harderoheme III + H2O2 + H(+) = heme b + CO2 + 2 H2O. Its pathway is porphyrin-containing compound metabolism; protoheme biosynthesis. Its function is as follows. Involved in coproporphyrin-dependent heme b biosynthesis. Catalyzes the decarboxylation of Fe-coproporphyrin III (coproheme) to heme b (protoheme IX), the last step of the pathway. The reaction occurs in a stepwise manner with a three-propionate intermediate. The sequence is that of Coproheme decarboxylase from Listeria innocua serovar 6a (strain ATCC BAA-680 / CLIP 11262).